A 336-amino-acid polypeptide reads, in one-letter code: Nuclear egress protein 2 (336 aa).

Over 1–315 the chain is Perinuclear space; it reads MASPEERLLD…AWRYSWRATP (315 aa). Disordered stretches follow at residues 193 to 221 and 277 to 297; these read RSGQ…GCLG and RTRE…VPPE. The span at 277 to 288 shows a compositional bias: basic residues; that stretch reads RTRETRRMRGSH. Residues 316–333 form a helical membrane-spanning segment; sequence YLARVLAVTAVALLLMFL. The Nuclear segment spans residues 334–336; sequence RWT.

It belongs to the herpesviridae NEC2 protein family. As to quaternary structure, forms a heterodimeric viral nuclear egress complex (NEC) with NEC1. Interacts with host IKBKE; this interaction inhibits host IKBKE kinase activity and IRF3 nuclear translocation. Post-translationally, phosphorylated.

Its subcellular location is the host nucleus inner membrane. It is found in the host cytoplasm. It localises to the host perinuclear region. Functionally, plays an essential role in virion nuclear egress, the first step of virion release from infected cell. Within the host nucleus, NEC1 interacts with the newly formed capsid through the vertexes and directs it to the inner nuclear membrane by associating with NEC2. Induces the budding of the capsid at the inner nuclear membrane as well as its envelopment into the perinuclear space. There, the NEC1/NEC2 complex promotes the fusion of the enveloped capsid with the outer nuclear membrane and the subsequent release of the viral capsid into the cytoplasm where it will reach the secondary budding sites in the host Golgi or trans-Golgi network. Inhibits host IKBKE and IRF3, thereby impairing type I IFN signaling. The chain is Nuclear egress protein 2 from Homo sapiens (Human).